A 436-amino-acid polypeptide reads, in one-letter code: Glutamyl-tRNA reductase (436 aa).

Substrate contacts are provided by residues 49 to 52, S109, 114 to 116, and Q120; these read TCNR and EGQ. Catalysis depends on C50, which acts as the Nucleophile. Position 198 to 203 (198 to 203) interacts with NADP(+); it reads GAGRMS.

Belongs to the glutamyl-tRNA reductase family. As to quaternary structure, homodimer.

The catalysed reaction is (S)-4-amino-5-oxopentanoate + tRNA(Glu) + NADP(+) = L-glutamyl-tRNA(Glu) + NADPH + H(+). Its pathway is porphyrin-containing compound metabolism; protoporphyrin-IX biosynthesis; 5-aminolevulinate from L-glutamyl-tRNA(Glu): step 1/2. It participates in porphyrin-containing compound metabolism; chlorophyll biosynthesis. Its function is as follows. Catalyzes the NADPH-dependent reduction of glutamyl-tRNA(Glu) to glutamate 1-semialdehyde (GSA). This chain is Glutamyl-tRNA reductase, found in Prochlorococcus marinus (strain MIT 9303).